A 44-amino-acid chain; its full sequence is Phycoerythrin alpha-1 chain (44 aa).

The interval 1–44 is disordered; it reads AMDKSAKAPQITIFDHRGCSRAPKSETGGTATKDDQMMVKVSQV. At lysine 4 the chain carries 5-hydroxylysine. 15,16-dihydrobiliverdin-binding residues include cysteine 19 and arginine 21. The interval 24–26 is 15,16-dihydrobiliverdin chromophore; that stretch reads KSE. A 15,16-dihydrobiliverdin-binding site is contributed by lysine 40.

Belongs to the phycoerythrin family. In terms of assembly, heterotetramer of 2 different alpha chains and 2 identical beta chains. The subunit composition could comprise of any combination of 2 out of 4 different alpha units with an invariant beta unit. Post-translationally, contains one covalently linked 15,16-dihydrobiliverdin chromophore.

The protein resides in the plastid. The protein localises to the chloroplast thylakoid membrane. Functionally, light-harvesting photosynthetic tetrapyrrole chromophore-protein from the phycobiliprotein complex. The polypeptide is Phycoerythrin alpha-1 chain (cpeA1) (Rhodomonas sp. (strain CS 24) (Chroomonas sp. (strain CS24))).